The chain runs to 429 residues: Phosphoribosylamine--glycine ligase (429 aa).

Residues 109–316 form the ATP-grasp domain; the sequence is KDFLARHQIP…LVDLCLAAID (208 aa). ATP is bound at residue 135–196; that stretch reads VREQGAPIVV…EEFLDGEEAS (62 aa). Positions 212-235 are disordered; sequence SQDHKRVGDKDTGPNTGGMGAYSP. The span at 213 to 223 shows a compositional bias: basic and acidic residues; that stretch reads QDHKRVGDKDT. Positions 286 and 288 each coordinate Mg(2+).

It belongs to the GARS family. Mg(2+) is required as a cofactor. The cofactor is Mn(2+).

The catalysed reaction is 5-phospho-beta-D-ribosylamine + glycine + ATP = N(1)-(5-phospho-beta-D-ribosyl)glycinamide + ADP + phosphate + H(+). Its pathway is purine metabolism; IMP biosynthesis via de novo pathway; N(1)-(5-phospho-D-ribosyl)glycinamide from 5-phospho-alpha-D-ribose 1-diphosphate: step 2/2. The polypeptide is Phosphoribosylamine--glycine ligase (Vibrio parahaemolyticus serotype O3:K6 (strain RIMD 2210633)).